The chain runs to 285 residues: Polyamine aminopropyltransferase (285 aa).

One can recognise a PABS domain in the interval 5-241; that stretch reads DTWFTEHFQA…GWWSVTLSSK (237 aa). Q35 provides a ligand contact to S-methyl-5'-thioadenosine. Spermidine is bound by residues H66 and D90. S-methyl-5'-thioadenosine is bound by residues D110 and 141–142; that span reads DG. D160 functions as the Proton acceptor in the catalytic mechanism. 160–163 contacts spermidine; that stretch reads DSTD. S-methyl-5'-thioadenosine is bound at residue P167.

It belongs to the spermidine/spermine synthase family. In terms of assembly, homodimer or homotetramer.

Its subcellular location is the cytoplasm. It carries out the reaction S-adenosyl 3-(methylsulfanyl)propylamine + putrescine = S-methyl-5'-thioadenosine + spermidine + H(+). The protein operates within amine and polyamine biosynthesis; spermidine biosynthesis; spermidine from putrescine: step 1/1. Functionally, catalyzes the irreversible transfer of a propylamine group from the amino donor S-adenosylmethioninamine (decarboxy-AdoMet) to putrescine (1,4-diaminobutane) to yield spermidine. The polypeptide is Polyamine aminopropyltransferase (Xylella fastidiosa (strain M12)).